Reading from the N-terminus, the 264-residue chain is Thymidylate synthase (264 aa).

Residue R21 coordinates dUMP. Residue H51 coordinates (6R)-5,10-methylene-5,6,7,8-tetrahydrofolate. 126–127 serves as a coordination point for dUMP; that stretch reads RR. The active-site Nucleophile is the C146. Residues 166-169, N177, and 207-209 each bind dUMP; these read RSAD and HLY. Residue D169 coordinates (6R)-5,10-methylene-5,6,7,8-tetrahydrofolate. A263 serves as a coordination point for (6R)-5,10-methylene-5,6,7,8-tetrahydrofolate.

It belongs to the thymidylate synthase family. Bacterial-type ThyA subfamily. Homodimer.

The protein resides in the cytoplasm. It catalyses the reaction dUMP + (6R)-5,10-methylene-5,6,7,8-tetrahydrofolate = 7,8-dihydrofolate + dTMP. The protein operates within pyrimidine metabolism; dTTP biosynthesis. Catalyzes the reductive methylation of 2'-deoxyuridine-5'-monophosphate (dUMP) to 2'-deoxythymidine-5'-monophosphate (dTMP) while utilizing 5,10-methylenetetrahydrofolate (mTHF) as the methyl donor and reductant in the reaction, yielding dihydrofolate (DHF) as a by-product. This enzymatic reaction provides an intracellular de novo source of dTMP, an essential precursor for DNA biosynthesis. This Cytophaga hutchinsonii (strain ATCC 33406 / DSM 1761 / CIP 103989 / NBRC 15051 / NCIMB 9469 / D465) protein is Thymidylate synthase.